Consider the following 345-residue polypeptide: RNA pseudouridine synthase 1 (345 aa).

D134 is an active-site residue.

This sequence belongs to the pseudouridine synthase RluA family.

The catalysed reaction is a uridine in RNA = a pseudouridine in RNA. This is RNA pseudouridine synthase 1 from Oryza sativa subsp. japonica (Rice).